A 263-amino-acid polypeptide reads, in one-letter code: 3-methyl-2-oxobutanoate hydroxymethyltransferase (263 aa).

Asp-44 and Asp-83 together coordinate Mg(2+). Residues 44-45, Asp-83, and Lys-112 contribute to the 3-methyl-2-oxobutanoate site; that span reads DS. Mg(2+) is bound at residue Glu-114. Glu-181 acts as the Proton acceptor in catalysis.

This sequence belongs to the PanB family. As to quaternary structure, homodecamer; pentamer of dimers. Mg(2+) serves as cofactor.

Its subcellular location is the cytoplasm. The enzyme catalyses 3-methyl-2-oxobutanoate + (6R)-5,10-methylene-5,6,7,8-tetrahydrofolate + H2O = 2-dehydropantoate + (6S)-5,6,7,8-tetrahydrofolate. It functions in the pathway cofactor biosynthesis; (R)-pantothenate biosynthesis; (R)-pantoate from 3-methyl-2-oxobutanoate: step 1/2. Catalyzes the reversible reaction in which hydroxymethyl group from 5,10-methylenetetrahydrofolate is transferred onto alpha-ketoisovalerate to form ketopantoate. The sequence is that of 3-methyl-2-oxobutanoate hydroxymethyltransferase from Sulfurimonas denitrificans (strain ATCC 33889 / DSM 1251) (Thiomicrospira denitrificans (strain ATCC 33889 / DSM 1251)).